Here is a 139-residue protein sequence, read N- to C-terminus: D-ribose pyranase (139 aa).

Residue histidine 20 is the Proton donor of the active site. Substrate contacts are provided by residues aspartate 28, histidine 106, and 128–130 (YAN).

This sequence belongs to the RbsD / FucU family. RbsD subfamily. As to quaternary structure, homodecamer.

It is found in the cytoplasm. It carries out the reaction beta-D-ribopyranose = beta-D-ribofuranose. It functions in the pathway carbohydrate metabolism; D-ribose degradation; D-ribose 5-phosphate from beta-D-ribopyranose: step 1/2. Catalyzes the interconversion of beta-pyran and beta-furan forms of D-ribose. The polypeptide is D-ribose pyranase (Shewanella halifaxensis (strain HAW-EB4)).